The primary structure comprises 347 residues: Heme A synthase (347 aa).

Helical transmembrane passes span 14–34 (VKIW…IGGI), 96–116 (FHRL…LYFM), 129–149 (FILI…MVKS), 162–182 (LAMH…HFLL), 199–219 (VFYI…LVAG), 260–280 (FIHE…LLVL), 287–307 (MYLL…TFIY), and 311–331 (IILA…SIYL). Histidine 262 is a heme binding site. Residue histidine 317 coordinates heme.

This sequence belongs to the COX15/CtaA family. Type 2 subfamily. As to quaternary structure, interacts with CtaB. Requires heme b as cofactor.

It is found in the cell membrane. The enzyme catalyses Fe(II)-heme o + 2 A + H2O = Fe(II)-heme a + 2 AH2. The protein operates within porphyrin-containing compound metabolism; heme A biosynthesis; heme A from heme O: step 1/1. Functionally, catalyzes the conversion of heme O to heme A by two successive hydroxylations of the methyl group at C8. The first hydroxylation forms heme I, the second hydroxylation results in an unstable dihydroxymethyl group, which spontaneously dehydrates, resulting in the formyl group of heme A. The chain is Heme A synthase from Ehrlichia ruminantium (strain Gardel).